Consider the following 312-residue polypeptide: Ribosomal protein L11 methyltransferase (312 aa).

Residues threonine 162, glycine 183, aspartate 205, and asparagine 248 each coordinate S-adenosyl-L-methionine.

Belongs to the methyltransferase superfamily. PrmA family.

It localises to the cytoplasm. It carries out the reaction L-lysyl-[protein] + 3 S-adenosyl-L-methionine = N(6),N(6),N(6)-trimethyl-L-lysyl-[protein] + 3 S-adenosyl-L-homocysteine + 3 H(+). Its function is as follows. Methylates ribosomal protein L11. The polypeptide is Ribosomal protein L11 methyltransferase (Exiguobacterium sp. (strain ATCC BAA-1283 / AT1b)).